The sequence spans 1976 residues: DNA-directed RNA polymerase V subunit 1 (1976 aa).

Zn(2+)-binding residues include C57, C60, C68, H71, C98, and C101. 3 residues coordinate Mg(2+): D449, D451, and D453. Residues P751–E763 are bridging helix. Residues W1215 to G1216 form repeat 1. An 18 X 2 AA repeats of [WG]-[GW] repeats region spans residues W1215–W1693. Disordered regions lie at residues E1272 to P1291, D1298 to L1718, and F1847 to T1976. Composition is skewed to basic and acidic residues over residues S1281 to P1291 and D1298 to K1307. Residues W1329 to G1330 form repeat 2. The segment covering S1332–T1348 has biased composition (polar residues). Residues T1349–K1371 show a composition bias toward basic and acidic residues. Tandem repeats lie at residues W1378 to G1379, W1415 to G1416, W1430 to G1431, W1439 to G1440, W1447 to G1448, W1464 to G1465, W1498 to G1499, W1528 to G1529, W1545 to G1546, W1562 to G1563, W1596 to G1597, W1604 to G1605, W1621 to G1622, W1638 to G1639, and W1641 to G1642. Positions W1415–W1430 are enriched in basic and acidic residues. Residues T1491–S1501 are compositionally biased toward polar residues. Over residues A1648 to S1678 the composition is skewed to basic and acidic residues. 2 tandem repeats follow at residues W1680–G1681 and G1692–W1693. Positions E1869 to I1878 are enriched in polar residues. A compositionally biased stretch (low complexity) spans Q1886–T1976.

It belongs to the RNA polymerase beta' chain family. Component of the RNA polymerase V complex. Interacts with NRPD4, NRPD2A, and (via C-terminus) with AGO4. Interacts with SUVH2. Mostly expressed in flowers, and, to a lower extent, in leaves. Present in sperm cells.

The protein localises to the nucleus. Its subcellular location is the nucleolus. The enzyme catalyses RNA(n) + a ribonucleoside 5'-triphosphate = RNA(n+1) + diphosphate. In terms of biological role, DNA-dependent RNA polymerase catalyzes the transcription of DNA into RNA using the four ribonucleoside triphosphates as substrates. Largest and catalytic component of RNA polymerase V involved in RNA-directed DNA methylation-dependent (RdDM) silencing of endogenous repeated sequences, including transposable elements. Also required for full erasure of methylation when the RNA trigger is withdrawn. Seems also involved in the synthesis of short-interfering RNAs (siRNA). Essential component of a self-reinforcing loop coupling de novo DNA methylation to siRNA production. Involved in the maintenance of post-transcriptional RNA silencing. This Arabidopsis thaliana (Mouse-ear cress) protein is DNA-directed RNA polymerase V subunit 1 (NRPE1).